Here is a 382-residue protein sequence, read N- to C-terminus: Carboxynorspermidine/carboxyspermidine decarboxylase (382 aa).

N6-(pyridoxal phosphate)lysine is present on Lys41. Substrate-binding residues include Glu236 and Asp272.

This sequence belongs to the Orn/Lys/Arg decarboxylase class-II family. NspC subfamily. As to quaternary structure, homodimer. Requires pyridoxal 5'-phosphate as cofactor.

It is found in the cytoplasm. The enzyme catalyses carboxynorspermidine + H(+) = norspermidine + CO2. It catalyses the reaction carboxyspermidine + H(+) = spermidine + CO2. Its function is as follows. Catalyzes the decarboxylation of carboxynorspermidine and carboxyspermidine in vitro. In vivo, responsible for synthesizing spermidine, but not sym-norspermidine. This is Carboxynorspermidine/carboxyspermidine decarboxylase from Campylobacter jejuni subsp. jejuni serotype O:6 (strain 81116 / NCTC 11828).